The following is a 94-amino-acid chain: Co-chaperonin GroES (94 aa).

This sequence belongs to the GroES chaperonin family. In terms of assembly, heptamer of 7 subunits arranged in a ring. Interacts with the chaperonin GroEL.

It localises to the cytoplasm. Together with the chaperonin GroEL, plays an essential role in assisting protein folding. The GroEL-GroES system forms a nano-cage that allows encapsulation of the non-native substrate proteins and provides a physical environment optimized to promote and accelerate protein folding. GroES binds to the apical surface of the GroEL ring, thereby capping the opening of the GroEL channel. The sequence is that of Co-chaperonin GroES from Shouchella clausii (strain KSM-K16) (Alkalihalobacillus clausii).